Reading from the N-terminus, the 352-residue chain is Protein Wnt-2 (352 aa).

Residues 1 to 23 (MWKIHNKLLIYILWIMEIRLVSS) form the signal peptide. Intrachain disulfides connect cysteine 65/cysteine 76, cysteine 115/cysteine 123, cysteine 125/cysteine 148, cysteine 196/cysteine 210, cysteine 198/cysteine 205, cysteine 281/cysteine 312, cysteine 297/cysteine 307, cysteine 311/cysteine 351, cysteine 327/cysteine 342, cysteine 329/cysteine 339, and cysteine 334/cysteine 335. N-linked (GlcNAc...) asparagine glycosylation is found at asparagine 75 and asparagine 119. Serine 202 carries the O-palmitoleoyl serine; by PORCN lipid modification.

It belongs to the Wnt family. Palmitoleoylated by porcupine. The lipid group functions as a sorting signal, targeting the ligand to polarized vesicles that transport Wnt2 to unique sites at the cell surface. Depalmitoleoylated by notum, leading to inhibit Wnt signaling pathway. In terms of tissue distribution, dynamic expression pattern during embryogenesis. Expression is predominantly segmented, with expression also seen in the limb primordia and presumptive gonads. In embryonic tracheal cells, expression is close to and dorsal to the tracheal placode.

It localises to the secreted. The protein localises to the extracellular space. It is found in the extracellular matrix. Binds as a ligand to a family of frizzled seven-transmembrane receptors and acts through a cascade of genes on the nucleus. Segment polarity protein. May function in gonadogenesis and limb development. Wg and Wnt2 have a role in the developing trachea and together are responsible for all dorsal trunk formation. In Drosophila melanogaster (Fruit fly), this protein is Protein Wnt-2 (Wnt2).